Consider the following 310-residue polypeptide: MRPAPRWTGRTDGTTDEHLRWHQVVAPYAPGAEPNSCVFVGFASDEGVRRNKGRVGAAAGPDALRQAMAPMALDRPRRAYDAGTVEVVGEALEEGQRALGGTVAGLLDAGHFPVVFGGGHEIAYGTYLGVAGSSRRAPGTRLGILNLDAHFDLRADPVPSSGTPFRQILAAEGDAVRYAVLGISQPSNTAALFDTAARFGVRHLPDDECDPATALAFVDAFLAEIDLVYLTIDLDVLPAAVAPGVSAPAAFGVPLPTLQAVCDRVSASGKLAVVDVAELNPGLDIDNRTARTAARLIHRIVTRHVPVPAG.

Residues His120, Asp148, His150, Asp152, Asp233, and Asp235 each contribute to the Mn(2+) site.

This sequence belongs to the arginase family. Requires Mn(2+) as cofactor.

The enzyme catalyses N-formimidoyl-L-glutamate + H2O = formamide + L-glutamate. It functions in the pathway amino-acid degradation; L-histidine degradation into L-glutamate; L-glutamate from N-formimidoyl-L-glutamate (hydrolase route): step 1/1. Catalyzes the conversion of N-formimidoyl-L-glutamate to L-glutamate and formamide. The protein is Formimidoylglutamase of Nocardia farcinica (strain IFM 10152).